A 282-amino-acid polypeptide reads, in one-letter code: Nucleotide-binding protein XAC2976 (282 aa).

5-12 is a binding site for ATP; the sequence is GLSGSGKS. Position 57-60 (57-60) interacts with GTP; that stretch reads DVRS.

The protein belongs to the RapZ-like family.

Its function is as follows. Displays ATPase and GTPase activities. In Xanthomonas axonopodis pv. citri (strain 306), this protein is Nucleotide-binding protein XAC2976.